The following is a 342-amino-acid chain: Pre-mRNA-splicing factor 18 (342 aa).

The protein belongs to the PRP18 family. Interacts with the spliceosome. Part of a complex containing U4/U6 snRNPs.

It localises to the nucleus speckle. Participates in the second step of pre-mRNA splicing. This is Pre-mRNA-splicing factor 18 (prpf18) from Danio rerio (Zebrafish).